A 258-amino-acid chain; its full sequence is Histidine/lysine/arginine/ornithine transport ATP-binding protein HisP (258 aa).

One can recognise an ABC transporter domain in the interval 7–253; sequence LHVIDLHKRY…PQSPRLQQFL (247 aa). 6 residues coordinate ATP: Ser-41, Gly-42, Gly-44, Lys-45, Ser-46, and Thr-47.

The protein belongs to the ABC transporter superfamily. In terms of assembly, the HisPMQJ complex is composed of two ATP-binding proteins (HisP), two transmembrane proteins (HisM and HisQ) and a solute-binding protein (HisJ). The HisPMQ-ArgT complex is composed of two ATP-binding proteins (HisP), two transmembrane proteins (HisM and HisQ) and a solute-binding protein (ArgT).

The protein resides in the cell inner membrane. It catalyses the reaction a polar amino acid(out) + ATP + H2O = a polar amino acid(in) + ADP + phosphate + H(+). The catalysed reaction is L-histidine(out) + ATP + H2O = L-histidine(in) + ADP + phosphate + H(+). It carries out the reaction L-lysine(out) + ATP + H2O = L-lysine(in) + ADP + phosphate + H(+). The enzyme catalyses L-arginine(out) + ATP + H2O = L-arginine(in) + ADP + phosphate + H(+). It catalyses the reaction L-ornithine(out) + ATP + H2O = L-ornithine(in) + ADP + phosphate + H(+). Isolated, soluble HisP has a very low ATPase activity. ATPase activity is slightly increased in the presence of HisM and HisQ, and strongly increased when HisJ is also present. Part of the ABC transporter complex HisPMQJ involved in histidine transport. Is also part of the ABC transporter complex HisPMQ-ArgT involved in lysine/arginine/ornithine transport. Shows ATPase activity. Responsible for energy coupling to the transport system. This is Histidine/lysine/arginine/ornithine transport ATP-binding protein HisP from Salmonella typhimurium (strain LT2 / SGSC1412 / ATCC 700720).